A 294-amino-acid chain; its full sequence is Phosphatidylserine decarboxylase proenzyme (294 aa).

Residues Asp113, His169, and Ser256 each act as charge relay system; for autoendoproteolytic cleavage activity in the active site. Residue Ser256 is the Schiff-base intermediate with substrate; via pyruvic acid; for decarboxylase activity of the active site. At Ser256 the chain carries Pyruvic acid (Ser); by autocatalysis.

This sequence belongs to the phosphatidylserine decarboxylase family. PSD-B subfamily. Prokaryotic type II sub-subfamily. As to quaternary structure, heterodimer of a large membrane-associated beta subunit and a small pyruvoyl-containing alpha subunit. Requires pyruvate as cofactor. In terms of processing, is synthesized initially as an inactive proenzyme. Formation of the active enzyme involves a self-maturation process in which the active site pyruvoyl group is generated from an internal serine residue via an autocatalytic post-translational modification. Two non-identical subunits are generated from the proenzyme in this reaction, and the pyruvate is formed at the N-terminus of the alpha chain, which is derived from the carboxyl end of the proenzyme. The autoendoproteolytic cleavage occurs by a canonical serine protease mechanism, in which the side chain hydroxyl group of the serine supplies its oxygen atom to form the C-terminus of the beta chain, while the remainder of the serine residue undergoes an oxidative deamination to produce ammonia and the pyruvoyl prosthetic group on the alpha chain. During this reaction, the Ser that is part of the protease active site of the proenzyme becomes the pyruvoyl prosthetic group, which constitutes an essential element of the active site of the mature decarboxylase.

It is found in the cell membrane. The enzyme catalyses a 1,2-diacyl-sn-glycero-3-phospho-L-serine + H(+) = a 1,2-diacyl-sn-glycero-3-phosphoethanolamine + CO2. It participates in phospholipid metabolism; phosphatidylethanolamine biosynthesis; phosphatidylethanolamine from CDP-diacylglycerol: step 2/2. Its function is as follows. Catalyzes the formation of phosphatidylethanolamine (PtdEtn) from phosphatidylserine (PtdSer). The sequence is that of Phosphatidylserine decarboxylase proenzyme from Clostridium perfringens (strain SM101 / Type A).